The following is a 172-amino-acid chain: R-phycocyanin beta chain (172 aa).

(2R,3E)-phycoerythrobilin is bound by residues Asn35 and Asp39. (2R,3E)-phycocyanobilin-binding positions include Asn72, Cys82, and 84 to 85 (RD). Asn72 is modified (N4-methylasparagine). (2R,3E)-phycoerythrobilin is bound by residues 149-151 (PAG) and Cys153.

The protein belongs to the phycobiliprotein family. In terms of assembly, heterododecamer of 6 alpha and 6 beta chains. The basic functional unit of phycobiliproteins is a ring-shaped hexamer formed from two back-to-back trimers contacting via the alpha chain subunits. The trimers are composed of alpha/beta subunit heterodimers arranged around a three-fold axis of symmetry. The phycoerythrins also contain a gamma subunit which is located in the center of the hexamer. In terms of processing, contains one covalently linked phycocyanobilin chromophore and one covalently linked phycoerythrobilin chromophore.

It localises to the plastid. It is found in the chloroplast thylakoid membrane. Functionally, light-harvesting photosynthetic tetrapyrrole chromophore-protein from the phycobiliprotein complex (phycobilisome, PBS). Phycocyanin is the major phycobiliprotein in the PBS rod. This Polysiphonia urceolata (Red alga) protein is R-phycocyanin beta chain (rpcB).